We begin with the raw amino-acid sequence, 349 residues long: Anthranilate phosphoribosyltransferase (349 aa).

5-phospho-alpha-D-ribose 1-diphosphate contacts are provided by residues Gly86, 89 to 90, Thr94, 96 to 99, 114 to 122, and Ser126; these read GD, NIST, and KHGNKSASG. Gly86 contributes to the anthranilate binding site. Mg(2+) is bound at residue Ser98. Residue Asn117 participates in anthranilate binding. Residue Arg172 participates in anthranilate binding. Residues Asp231 and Glu232 each coordinate Mg(2+).

The protein belongs to the anthranilate phosphoribosyltransferase family. In terms of assembly, homodimer. Mg(2+) serves as cofactor.

It carries out the reaction N-(5-phospho-beta-D-ribosyl)anthranilate + diphosphate = 5-phospho-alpha-D-ribose 1-diphosphate + anthranilate. The protein operates within amino-acid biosynthesis; L-tryptophan biosynthesis; L-tryptophan from chorismate: step 2/5. Functionally, catalyzes the transfer of the phosphoribosyl group of 5-phosphorylribose-1-pyrophosphate (PRPP) to anthranilate to yield N-(5'-phosphoribosyl)-anthranilate (PRA). This chain is Anthranilate phosphoribosyltransferase, found in Prochlorococcus marinus (strain MIT 9312).